We begin with the raw amino-acid sequence, 230 residues long: 3-dehydroquinate dehydratase (230 aa).

3-dehydroquinate-binding positions include Ser26, 51–53 (EIR), and Arg84. His127 serves as the catalytic Proton donor/acceptor. The active-site Schiff-base intermediate with substrate is the Lys150. The 3-dehydroquinate site is built by Arg190, Thr209, and Gln213.

This sequence belongs to the type-I 3-dehydroquinase family. Homodimer.

The catalysed reaction is 3-dehydroquinate = 3-dehydroshikimate + H2O. Its pathway is metabolic intermediate biosynthesis; chorismate biosynthesis; chorismate from D-erythrose 4-phosphate and phosphoenolpyruvate: step 3/7. Involved in the third step of the chorismate pathway, which leads to the biosynthesis of aromatic amino acids. Catalyzes the cis-dehydration of 3-dehydroquinate (DHQ) and introduces the first double bond of the aromatic ring to yield 3-dehydroshikimate. The polypeptide is 3-dehydroquinate dehydratase (Thermoplasma volcanium (strain ATCC 51530 / DSM 4299 / JCM 9571 / NBRC 15438 / GSS1)).